The sequence spans 176 residues: ATP synthase subunit d, mitochondrial (176 aa).

As to quaternary structure, F-type ATP synthases have 2 components, the catalytic core F(1) and the membrane-embedded component F(0), linked together by a central stalk and a peripheral stalk. The central stalk, also called rotor shaft, is often seen as part of F(1). The peripheral stalk is seen as part of F(0). F(0) contains the membrane channel next to the rotor. F-type ATP synthases form dimers but each monomer functions independently in ATP generation. The dimer consists of 17 different polypeptides: ATP1 (subunit alpha, 3 molecules per monomer, part of F(1)), ATP2 (subunit beta, 3 copies per monomer, part of F(1)), ATP3 (subunit gamma, part of the central stalk), ATP4 (subunit b, part of the peripheral stalk), ATP5/OSCP (subunit 5/OSCP, part of the peripheral stalk), ATP6 (subunit a, part of the peripheral stalk), ATP7 (subunit d, part of the peripheral stalk), ATP8 (subunit 8, part of the peripheral stalk), OLI1 (subunit c, part of the rotor, 10 molecules per monomer), ATP14 (subunit h, part of the peripheral stalk), ATP15 (subunit epsilon, part of the central stalk), ATP16 (subunit delta, part of the central stalk), ATP17 (subunit f, part of the peripheral stalk), ATP18 (subunit i/j, part of the peripheral stalk), ATP19 (subunit k, dimer-specific, at interface between monomers), ATP20 (subunit g, at interface between monomers), TIM11 (subunit e, at interface between monomers).

Its subcellular location is the mitochondrion inner membrane. Its function is as follows. Mitochondrial membrane ATP synthase (F(1)F(0) ATP synthase or Complex V) produces ATP from ADP in the presence of a proton gradient across the membrane which is generated by electron transport complexes of the respiratory chain. F-type ATP synthases consist of two structural domains, F(1) - containing the extramembraneous catalytic core, and F(0) - containing the membrane proton channel, linked together by a central stalk and a peripheral stalk. During catalysis, ATP synthesis in the catalytic domain of F(1) is coupled via a rotary mechanism of the central stalk subunits to proton translocation. Part of the complex F(0) domain and the peripheral stalk, which acts as a stator to hold the catalytic alpha/ATP1(3)beta/ATP2(3) subcomplex and subunit a/ATP6 static relative to the rotary elements. The sequence is that of ATP synthase subunit d, mitochondrial from Yarrowia lipolytica (strain CLIB 122 / E 150) (Yeast).